A 237-amino-acid polypeptide reads, in one-letter code: MEKRSELYRGKAKTVYHTDDPNRLVLEFRNDTSAFDGEKVEQLDDKGMVNNKFNHFIMSKLEEAGIPTQLDERLSDTESLVKKLDMIPVECVVRNVAAGSLVRRLGVEEGKELNPPTFEFFLKNDALHDPMVNEYHIQAFGWATAEQIEKMKELTFKVNDVLKALFADAGLLLVDYKLEFGVFDGEIMLGDEFTPDGCRLWDAETREKLDKDRFRQGLGGVVEAYREVAKRLGVTLD.

Belongs to the SAICAR synthetase family.

The enzyme catalyses 5-amino-1-(5-phospho-D-ribosyl)imidazole-4-carboxylate + L-aspartate + ATP = (2S)-2-[5-amino-1-(5-phospho-beta-D-ribosyl)imidazole-4-carboxamido]succinate + ADP + phosphate + 2 H(+). Its pathway is purine metabolism; IMP biosynthesis via de novo pathway; 5-amino-1-(5-phospho-D-ribosyl)imidazole-4-carboxamide from 5-amino-1-(5-phospho-D-ribosyl)imidazole-4-carboxylate: step 1/2. The protein is Phosphoribosylaminoimidazole-succinocarboxamide synthase of Idiomarina loihiensis (strain ATCC BAA-735 / DSM 15497 / L2-TR).